Reading from the N-terminus, the 475-residue chain is ATP synthase subunit beta, chloroplastic (475 aa).

Residue 155 to 162 (GGAGVGKT) participates in ATP binding.

The protein belongs to the ATPase alpha/beta chains family. F-type ATPases have 2 components, CF(1) - the catalytic core - and CF(0) - the membrane proton channel. CF(1) has five subunits: alpha(3), beta(3), gamma(1), delta(1), epsilon(1). CF(0) has four main subunits: a(1), b(1), b'(1) and c(9-12).

The protein resides in the plastid. It localises to the chloroplast thylakoid membrane. It catalyses the reaction ATP + H2O + 4 H(+)(in) = ADP + phosphate + 5 H(+)(out). Its function is as follows. Produces ATP from ADP in the presence of a proton gradient across the membrane. The catalytic sites are hosted primarily by the beta subunits. This Porphyra purpurea (Red seaweed) protein is ATP synthase subunit beta, chloroplastic.